A 155-amino-acid chain; its full sequence is 6,7-dimethyl-8-ribityllumazine synthase (155 aa).

5-amino-6-(D-ribitylamino)uracil is bound by residues Trp-22, 56-58, and 80-82; these read SYE and AVI. Position 85 to 86 (85 to 86) interacts with (2S)-2-hydroxy-3-oxobutyl phosphate; it reads DT. His-88 acts as the Proton donor in catalysis. Residue Phe-113 participates in 5-amino-6-(D-ribitylamino)uracil binding. (2S)-2-hydroxy-3-oxobutyl phosphate is bound at residue Arg-127.

This sequence belongs to the DMRL synthase family.

It catalyses the reaction (2S)-2-hydroxy-3-oxobutyl phosphate + 5-amino-6-(D-ribitylamino)uracil = 6,7-dimethyl-8-(1-D-ribityl)lumazine + phosphate + 2 H2O + H(+). It participates in cofactor biosynthesis; riboflavin biosynthesis; riboflavin from 2-hydroxy-3-oxobutyl phosphate and 5-amino-6-(D-ribitylamino)uracil: step 1/2. Its function is as follows. Catalyzes the formation of 6,7-dimethyl-8-ribityllumazine by condensation of 5-amino-6-(D-ribitylamino)uracil with 3,4-dihydroxy-2-butanone 4-phosphate. This is the penultimate step in the biosynthesis of riboflavin. This chain is 6,7-dimethyl-8-ribityllumazine synthase, found in Deinococcus radiodurans (strain ATCC 13939 / DSM 20539 / JCM 16871 / CCUG 27074 / LMG 4051 / NBRC 15346 / NCIMB 9279 / VKM B-1422 / R1).